The primary structure comprises 247 residues: MNKQRVTLNCDMGESFGNWKMGSDELVMPWVDMANIACGFHASDPSVMSKTVALAKHYKVKIGAHPGYQDLVGFGRRSIPHTPAQISEIVLYQVGALKAVCQYHDVPLHYVKPHGALYNDMMESEAIFRAICEAVSIFGIPLMILATSDNQRYLDIADIYDVPLLFEAFADRQYQEDGKLTPRSQANAVYHQPEDIYNQALQIATYGSVNTANGTRLSLEADTICVHGDNPESITLVQRISQAIAKM.

This sequence belongs to the LamB/PxpA family. Forms a complex composed of PxpA, PxpB and PxpC.

The enzyme catalyses 5-oxo-L-proline + ATP + 2 H2O = L-glutamate + ADP + phosphate + H(+). Catalyzes the cleavage of 5-oxoproline to form L-glutamate coupled to the hydrolysis of ATP to ADP and inorganic phosphate. The protein is 5-oxoprolinase subunit A of Vibrio vulnificus (strain YJ016).